Here is a 101-residue protein sequence, read N- to C-terminus: UPF0213 protein lp_2058 (101 aa).

Positions 15–92 (KKYYFYVLLC…KHQSRAAKLK (78 aa)) constitute a GIY-YIG domain.

The protein belongs to the UPF0213 family.

This Lactiplantibacillus plantarum (strain ATCC BAA-793 / NCIMB 8826 / WCFS1) (Lactobacillus plantarum) protein is UPF0213 protein lp_2058.